A 274-amino-acid polypeptide reads, in one-letter code: Dermonecrotic toxin SdSicTox-betaIIB1bxiii (274 aa).

Histidine 5 is an active-site residue. Mg(2+) contacts are provided by glutamate 25 and aspartate 27. The active-site Nucleophile is histidine 41. 2 disulfide bridges follow: cysteine 45/cysteine 51 and cysteine 47/cysteine 190. Aspartate 85 is a binding site for Mg(2+).

Belongs to the arthropod phospholipase D family. Class II subfamily. It depends on Mg(2+) as a cofactor. In terms of tissue distribution, expressed by the venom gland.

The protein localises to the secreted. The catalysed reaction is an N-(acyl)-sphingosylphosphocholine = an N-(acyl)-sphingosyl-1,3-cyclic phosphate + choline. The enzyme catalyses an N-(acyl)-sphingosylphosphoethanolamine = an N-(acyl)-sphingosyl-1,3-cyclic phosphate + ethanolamine. It carries out the reaction a 1-acyl-sn-glycero-3-phosphocholine = a 1-acyl-sn-glycero-2,3-cyclic phosphate + choline. It catalyses the reaction a 1-acyl-sn-glycero-3-phosphoethanolamine = a 1-acyl-sn-glycero-2,3-cyclic phosphate + ethanolamine. In terms of biological role, dermonecrotic toxins cleave the phosphodiester linkage between the phosphate and headgroup of certain phospholipids (sphingolipid and lysolipid substrates), forming an alcohol (often choline) and a cyclic phosphate. This toxin acts on sphingomyelin (SM). It may also act on ceramide phosphoethanolamine (CPE), lysophosphatidylcholine (LPC) and lysophosphatidylethanolamine (LPE), but not on lysophosphatidylserine (LPS), and lysophosphatidylglycerol (LPG). It acts by transphosphatidylation, releasing exclusively cyclic phosphate products as second products. Induces dermonecrosis, hemolysis, increased vascular permeability, edema, inflammatory response, and platelet aggregation. This Sicarius cf. damarensis (strain GJB-2008) (Six-eyed sand spider) protein is Dermonecrotic toxin SdSicTox-betaIIB1bxiii.